Consider the following 264-residue polypeptide: Somatomedin-B and thrombospondin type-1 domain-containing protein (264 aa).

The first 20 residues, 1-20 (MKTLWMVLCALARLWPGALA), serve as a signal peptide directing secretion. Positions 24–75 (EAGRCCPGRDPACFARGWRLDRVYGTCFCDQACRLTGDCCFDYDRACPARPC) constitute an SMB domain. Intrachain disulfides connect cysteine 28-cysteine 36, cysteine 28-cysteine 52, cysteine 36-cysteine 70, cysteine 50-cysteine 52, cysteine 50-cysteine 63, cysteine 56-cysteine 62, and cysteine 63-cysteine 70. The TSP type-1 domain maps to 74-125 (PCFVGEWSPWSGCAGQCQPTTRVRRRSVRQEPLNGGAPCPPLEERAGCLEYS). The N-linked (GlcNAc...) asparagine glycan is linked to asparagine 227.

The protein belongs to the thrombospondin family.

It is found in the secreted. Its subcellular location is the extracellular space. The protein localises to the extracellular matrix. The chain is Somatomedin-B and thrombospondin type-1 domain-containing protein (Sbspon) from Mus musculus (Mouse).